Here is a 382-residue protein sequence, read N- to C-terminus: Alkanesulfonate monooxygenase (382 aa).

Belongs to the SsuD family. As to quaternary structure, homotetramer.

The catalysed reaction is an alkanesulfonate + FMNH2 + O2 = an aldehyde + FMN + sulfite + H2O + 2 H(+). In terms of biological role, catalyzes the desulfonation of aliphatic sulfonates. This Buttiauxella sp. (strain PNBS) protein is Alkanesulfonate monooxygenase.